Reading from the N-terminus, the 402-residue chain is 4-hydroxy-3-methylbut-2-enyl diphosphate reductase (402 aa).

A [4Fe-4S] cluster-binding site is contributed by cysteine 66. Residue histidine 96 coordinates (2E)-4-hydroxy-3-methylbut-2-enyl diphosphate. Histidine 96 is a binding site for dimethylallyl diphosphate. Histidine 96 lines the isopentenyl diphosphate pocket. Residue cysteine 157 participates in [4Fe-4S] cluster binding. Residue histidine 185 participates in (2E)-4-hydroxy-3-methylbut-2-enyl diphosphate binding. A dimethylallyl diphosphate-binding site is contributed by histidine 185. Histidine 185 is an isopentenyl diphosphate binding site. The active-site Proton donor is glutamate 187. (2E)-4-hydroxy-3-methylbut-2-enyl diphosphate is bound at residue threonine 250. Cysteine 288 lines the [4Fe-4S] cluster pocket. Residues serine 317, serine 318, asparagine 319, and serine 379 each contribute to the (2E)-4-hydroxy-3-methylbut-2-enyl diphosphate site. Positions 317, 318, 319, and 379 each coordinate dimethylallyl diphosphate. Isopentenyl diphosphate is bound by residues serine 317, serine 318, asparagine 319, and serine 379.

Belongs to the IspH family. [4Fe-4S] cluster serves as cofactor.

It catalyses the reaction isopentenyl diphosphate + 2 oxidized [2Fe-2S]-[ferredoxin] + H2O = (2E)-4-hydroxy-3-methylbut-2-enyl diphosphate + 2 reduced [2Fe-2S]-[ferredoxin] + 2 H(+). It carries out the reaction dimethylallyl diphosphate + 2 oxidized [2Fe-2S]-[ferredoxin] + H2O = (2E)-4-hydroxy-3-methylbut-2-enyl diphosphate + 2 reduced [2Fe-2S]-[ferredoxin] + 2 H(+). It participates in isoprenoid biosynthesis; dimethylallyl diphosphate biosynthesis; dimethylallyl diphosphate from (2E)-4-hydroxy-3-methylbutenyl diphosphate: step 1/1. It functions in the pathway isoprenoid biosynthesis; isopentenyl diphosphate biosynthesis via DXP pathway; isopentenyl diphosphate from 1-deoxy-D-xylulose 5-phosphate: step 6/6. In terms of biological role, catalyzes the conversion of 1-hydroxy-2-methyl-2-(E)-butenyl 4-diphosphate (HMBPP) into a mixture of isopentenyl diphosphate (IPP) and dimethylallyl diphosphate (DMAPP). Acts in the terminal step of the DOXP/MEP pathway for isoprenoid precursor biosynthesis. The polypeptide is 4-hydroxy-3-methylbut-2-enyl diphosphate reductase (Gloeothece citriformis (strain PCC 7424) (Cyanothece sp. (strain PCC 7424))).